Here is a 125-residue protein sequence, read N- to C-terminus: Calcitonin receptor-stimulating peptide 1 (125 aa).

An N-terminal signal peptide occupies residues 1-25 (MGFWKFPPFLVLSILVLYQAGMFHA). A propeptide spanning residues 26 to 77 (APFRSVFDGRFDPATLDEEESRLLLAAMVNDYEQMRTRESEKAQKTEGSRIQ) is cleaved from the precursor. A disulfide bridge links Cys-81 with Cys-86.

Belongs to the calcitonin family.

It is found in the secreted. Functionally, stimulates cAMP production via the calcitonin receptor (CT) but not via the CT-like (CL) receptor. This is Calcitonin receptor-stimulating peptide 1 (CRSP1) from Ovis aries (Sheep).